A 245-amino-acid polypeptide reads, in one-letter code: MIIPAIDLIDGKVVRLYQGDYGQQTTFDLSPLAQLQSYQDQGANWLHIVDLTGAKEPAKRQTTLIAKLTAGLSANIQVGGGIRTEEQVAELLSLGVKRVVIGSLAVKEPELVKGWFNKFGSEAICLALDVNINQSGEKIVAVSGWQSGGGKSLESIVEDFSQVGLKHALVTDISRDGTLTGANTELYRELSSRYPDIAWQASGGIATLEDVAAVRDSGAAGIIIGKALLINQFNVAEAIQCWPNE.

Aspartate 7 serves as the catalytic Proton acceptor. Aspartate 129 acts as the Proton donor in catalysis.

The protein belongs to the HisA/HisF family.

It localises to the cytoplasm. It catalyses the reaction 1-(5-phospho-beta-D-ribosyl)-5-[(5-phospho-beta-D-ribosylamino)methylideneamino]imidazole-4-carboxamide = 5-[(5-phospho-1-deoxy-D-ribulos-1-ylimino)methylamino]-1-(5-phospho-beta-D-ribosyl)imidazole-4-carboxamide. It participates in amino-acid biosynthesis; L-histidine biosynthesis; L-histidine from 5-phospho-alpha-D-ribose 1-diphosphate: step 4/9. In Shewanella sp. (strain MR-4), this protein is 1-(5-phosphoribosyl)-5-[(5-phosphoribosylamino)methylideneamino] imidazole-4-carboxamide isomerase.